The sequence spans 1487 residues: Collagen alpha-1(II) chain (1487 aa).

The first 25 residues, 1–25 (MIRLGAPQTLVLLTLLVAAVLRCHG), serve as a signal peptide directing secretion. Residues 26-181 (QDVQKAGSCV…PPGLGGNFAA (156 aa)) constitute a propeptide, N-terminal propeptide. The VWFC domain occupies 32-90 (GSCVQDGQRYNDKDVWKPEPCRICVCDTGTVLCDDIICEDMKDCLSPETPFGECCPICS). The interval 96 to 1234 (ASGQPGPKGQ…GLGQREKGPD (1139 aa)) is disordered. Basic and acidic residues-rich tracts occupy residues 105 to 116 (QKGEPGDIKDIV) and 133 to 154 (PRGDRGDKGEKGAPGPRGRDGE). Residues 158–173 (PGNPGPPGPPGPPGPP) show a composition bias toward pro residues. Lys-190 carries the 5-hydroxylysine modification. Lys-190 carries O-linked (Gal...) hydroxylysine glycosylation. Residues 192-203 (GGAQMGVMQGPM) are compositionally biased toward low complexity. The triple-helical region stretch occupies residues 201–1214 (GPMGPMGPRG…PGPPGPPGPP (1014 aa)). Residues 208-217 (PRGPPGPAGA) show a composition bias toward pro residues. Residues Pro-212, Pro-218, Pro-230, Pro-233, Pro-245, Pro-248, Pro-251, Pro-260, Pro-269, Pro-278, Pro-281, and Pro-284 each carry the hydroxyproline modification. Low complexity predominate over residues 218–239 (PGPQGFQGNPGEPGEPGVSGPM). Over residues 241–250 (PRGPPGPPGK) the composition is skewed to pro residues. A compositionally biased stretch (basic and acidic residues) spans 251-265 (PGDDGEAGKPGKSGE). The residue at position 287 (Lys-287) is a 5-hydroxylysine. A glycan (O-linked (Gal...) hydroxylysine) is linked at Lys-287. At Pro-293 the chain carries Hydroxyproline. Lys-299 is subject to 5-hydroxylysine. Residue Lys-299 is glycosylated (O-linked (Gal...) hydroxylysine). A Hydroxyproline modification is found at Pro-305. Position 308 is a 5-hydroxylysine (Lys-308). Residue Lys-308 is glycosylated (O-linked (Gal...) hydroxylysine). Residues 310–320 (ESGSPGENGSP) are compositionally biased toward low complexity. Residues Pro-314, Pro-320, Pro-329, Pro-350, Pro-356, Pro-365, Pro-368, and Pro-371 each carry the hydroxyproline modification. Residues 335 to 350 (TGPAGAAGARGNDGQP) are compositionally biased toward low complexity. Residues 360 to 369 (GPAGGPGFPG) show a composition bias toward gly residues. 2 stretches are compositionally biased toward low complexity: residues 370 to 382 (APGAKGEAGPTGA) and 391 to 431 (PRGE…AGAP). Position 374 is a 5-hydroxylysine (Lys-374). An O-linked (Gal...) hydroxylysine glycan is attached at Lys-374. 5 positions are modified to hydroxyproline: Pro-395, Pro-398, Pro-401, Pro-410, and Pro-416. Residue Lys-419 is modified to 5-hydroxylysine. Residues Pro-425, Pro-431, Pro-434, and Pro-440 each carry the hydroxyproline modification. The segment covering 433 to 442 (FPGPRGPPGP) has biased composition (pro residues). Lys-452 is subject to 5-hydroxylysine. Pro-458 is modified (hydroxyproline). 2 positions are modified to 5-hydroxylysine: Lys-464 and Lys-470. A hydroxyproline mark is found at Pro-473, Pro-482, Pro-497, Pro-506, Pro-512, and Pro-518. Position 527 is a 5-hydroxylysine (Lys-527). Pro-530 carries the hydroxyproline modification. The residue at position 542 (Lys-542) is a 5-hydroxylysine. Hydroxyproline is present on residues Pro-551, Pro-557, Pro-566, Pro-581, Pro-587, Pro-590, Pro-599, and Pro-605. The residue at position 608 (Lys-608) is a 5-hydroxylysine. An O-linked (Gal...) hydroxylysine glycan is attached at Lys-608. Position 614 is a hydroxyproline (Pro-614). A 5-hydroxylysine modification is found at Lys-620. Residue Lys-620 is glycosylated (O-linked (Gal...) hydroxylysine). Low complexity predominate over residues 622-631 (LPGAPGLRGL). Hydroxyproline occurs at positions 623, 626, 632, 644, 659, and 668. Residues 656–667 (QGAPGPSGFQGL) are compositionally biased toward low complexity. The residue at position 670 (Pro-670) is a 3-hydroxyproline. Hydroxyproline is present on residues Pro-671 and Pro-674. A compositionally biased stretch (low complexity) spans 721 to 736 (LPGTPGTDGPKGAAGP). Residues 764 to 775 (KGDRGDVGEKGP) show a composition bias toward basic and acidic residues. Composition is skewed to low complexity over residues 833–848 (AGFAGPPGADGQPGAK) and 877–913 (PTGVTGPKGARGAQGPPGATGFPGAAGRVGPPGSNGN). Pro-907 carries the post-translational modification 3-hydroxyproline. A 4-hydroxyproline mark is found at Pro-908, Pro-914, and Pro-920. Residues 1069 to 1079 (APGPPGSPGPA) are compositionally biased toward pro residues. Low complexity predominate over residues 1091–1109 (AGAQGPMGPAGPAGARGMP). Positions 1115 to 1129 (RGDKGETGEAGERGL) are enriched in basic and acidic residues. A 5-hydroxylysine modification is found at Lys-1130. Lys-1130 is a glycosylation site (O-linked (Gal...) hydroxylysine). Pro-1144 carries the 3-hydroxyproline modification. Over residues 1148 to 1157 (SGDQGASGPA) the composition is skewed to low complexity. Pro-1181 bears the 4-hydroxyproline mark. Residue Pro-1186 is modified to 3-hydroxyproline. The residue at position 1187 (Pro-1187) is a 4-hydroxyproline. The segment covering 1199–1216 (AGPPGNPGPPGPPGPPGP) has biased composition (pro residues). Residue Pro-1201 is modified to 3-hydroxyproline. 2 positions are modified to 4-hydroxyproline: Pro-1202 and Pro-1205. Pro-1207 bears the 3-hydroxyproline mark. 2 positions are modified to 4-hydroxyproline: Pro-1208 and Pro-1211. Residue Pro-1213 is modified to 3-hydroxyproline. At Pro-1214 the chain carries 4-hydroxyproline. The segment at 1215–1241 (GPGIDMSAFAGLGQREKGPDPLQYMRA) is nonhelical region (C-terminal). The region spanning 1253-1487 (AEVDATLKSL…GVDIGPVCFL (235 aa)) is the Fibrillar collagen NC1 domain. Cystine bridges form between Cys-1283–Cys-1315, Cys-1323–Cys-1485, and Cys-1393–Cys-1438. 5 residues coordinate Ca(2+): Asp-1301, Asn-1303, Gln-1304, Cys-1306, and Asp-1309. N-linked (GlcNAc...) asparagine glycosylation occurs at Asn-1388.

The protein belongs to the fibrillar collagen family. As to quaternary structure, homotrimers of alpha 1(II) chains. In terms of processing, probably 3-hydroxylated on prolines by LEPREL1. Proline residues at the third position of the tripeptide repeating unit (G-X-P) are hydroxylated in some or all of the chains. Proline residues at the second position of the tripeptide repeating unit (G-P-X) are hydroxylated in some of the chains. O-linked glycans consist of Glc-Gal disaccharides bound to the oxygen atom of post-translationally added hydroxyl groups. Post-translationally, contains mostly 4-hydroxyproline. Prolines at the third position of the tripeptide repeating unit (G-X-P) are 4-hydroxylated in some or all of the chains. In terms of processing, contains 3-hydroxyproline at a few sites. This modification occurs on the first proline residue in the sequence motif Gly-Pro-Hyp, where Hyp is 4-hydroxyproline. Lysine residues at the third position of the tripeptide repeating unit (G-X-Y) are 5-hydroxylated in some or all of the chains. Post-translationally, O-glycosylated on hydroxylated lysine residues. The O-linked glycan consists of a Glc-Gal disaccharide.

It is found in the secreted. Its subcellular location is the extracellular space. The protein resides in the extracellular matrix. In terms of biological role, type II collagen is specific for cartilaginous tissues. It is essential for the normal embryonic development of the skeleton, for linear growth and for the ability of cartilage to resist compressive forces. This Bos taurus (Bovine) protein is Collagen alpha-1(II) chain.